The chain runs to 250 residues: 2,3-bisphosphoglycerate-dependent phosphoglycerate mutase (250 aa).

Substrate contacts are provided by residues 10 to 17 (RHGESVWN), 23 to 24 (TG), Arg-62, 89 to 92 (ERHY), Lys-100, 116 to 117 (RR), and 185 to 186 (GN). His-11 acts as the Tele-phosphohistidine intermediate in catalysis. The active-site Proton donor/acceptor is Glu-89.

Belongs to the phosphoglycerate mutase family. BPG-dependent PGAM subfamily. As to quaternary structure, homodimer.

The enzyme catalyses (2R)-2-phosphoglycerate = (2R)-3-phosphoglycerate. The protein operates within carbohydrate degradation; glycolysis; pyruvate from D-glyceraldehyde 3-phosphate: step 3/5. In terms of biological role, catalyzes the interconversion of 2-phosphoglycerate and 3-phosphoglycerate. The sequence is that of 2,3-bisphosphoglycerate-dependent phosphoglycerate mutase from Proteus mirabilis (strain HI4320).